A 409-amino-acid chain; its full sequence is DNA replication and repair protein RecF (409 aa).

An ATP-binding site is contributed by 30–37; that stretch reads GSNGHGKT.

This sequence belongs to the RecF family.

It localises to the cytoplasm. The RecF protein is involved in DNA metabolism; it is required for DNA replication and normal SOS inducibility. RecF binds preferentially to single-stranded, linear DNA. It also seems to bind ATP. The chain is DNA replication and repair protein RecF from Rhodococcus erythropolis (strain PR4 / NBRC 100887).